A 247-amino-acid chain; its full sequence is Chromosome partition protein MukE (247 aa).

The segment at 213-247 (AQSLQEEKNGLKDNMDQSAVENEQYFENEENEGIA) is disordered. The segment covering 217–227 (QEEKNGLKDNM) has biased composition (basic and acidic residues). A compositionally biased stretch (acidic residues) spans 236-247 (QYFENEENEGIA).

This sequence belongs to the MukE family. In terms of assembly, interacts, and probably forms a ternary complex, with MukF and MukB. The complex formation is stimulated by calcium or magnesium.

Its subcellular location is the cytoplasm. The protein resides in the nucleoid. Involved in chromosome condensation, segregation and cell cycle progression. May participate in facilitating chromosome segregation by condensation DNA from both sides of a centrally located replisome during cell division. Probably acts via its interaction with MukB and MukF. The sequence is that of Chromosome partition protein MukE from Histophilus somni (strain 2336) (Haemophilus somnus).